Reading from the N-terminus, the 475-residue chain is Trifunctional enzyme subunit beta, mitochondrial (475 aa).

A mitochondrion-targeting transit peptide spans 1-34; sequence MTTILTYPFKNLPTASKWALRFSIRPLSCSSQLR. The residue at position 73 (Lys-73) is an N6-acetyllysine; alternate. Lys-73 carries the post-translational modification N6-succinyllysine; alternate. The active-site Acyl-thioester intermediate is Cys-139. An intramembrane segment occupies 174 to 221; sequence IRHSRKMRKLMLDLNKAKSMGQRLSLISKFRFNFLAPELPAVSEFSTS. An N6-acetyllysine; alternate modification is found at Lys-189. Lys-189 carries the post-translational modification N6-succinyllysine; alternate. N6-succinyllysine is present on residues Lys-191, Lys-273, and Lys-292. At Lys-294 the chain carries N6-acetyllysine; alternate. At Lys-294 the chain carries N6-succinyllysine; alternate. The residue at position 299 (Lys-299) is an N6-acetyllysine. The residue at position 333 (Lys-333) is an N6-acetyllysine; alternate. Lys-333 bears the N6-succinyllysine; alternate mark. An N6-acetyllysine mark is found at Lys-349 and Lys-362. The active-site Proton donor/acceptor is the Cys-459.

It belongs to the thiolase-like superfamily. Thiolase family. Heterotetramer of 2 alpha/HADHA and 2 beta/HADHB subunits; forms the mitochondrial trifunctional enzyme. Also purified as higher order heterooligomers including a 4 alpha/HADHA and 4 beta/HADHB heterooligomer which physiological significance remains unclear. The mitochondrial trifunctional enzyme interacts with MTLN. Interacts with RSAD2/viperin.

Its subcellular location is the mitochondrion. The protein localises to the mitochondrion inner membrane. It localises to the mitochondrion outer membrane. The protein resides in the endoplasmic reticulum. It carries out the reaction an acyl-CoA + acetyl-CoA = a 3-oxoacyl-CoA + CoA. It catalyses the reaction butanoyl-CoA + acetyl-CoA = 3-oxohexanoyl-CoA + CoA. The catalysed reaction is hexanoyl-CoA + acetyl-CoA = 3-oxooctanoyl-CoA + CoA. The enzyme catalyses octanoyl-CoA + acetyl-CoA = 3-oxodecanoyl-CoA + CoA. It carries out the reaction decanoyl-CoA + acetyl-CoA = 3-oxododecanoyl-CoA + CoA. It catalyses the reaction dodecanoyl-CoA + acetyl-CoA = 3-oxotetradecanoyl-CoA + CoA. The catalysed reaction is tetradecanoyl-CoA + acetyl-CoA = 3-oxohexadecanoyl-CoA + CoA. It participates in lipid metabolism; fatty acid beta-oxidation. Its function is as follows. Mitochondrial trifunctional enzyme catalyzes the last three of the four reactions of the mitochondrial beta-oxidation pathway. The mitochondrial beta-oxidation pathway is the major energy-producing process in tissues and is performed through four consecutive reactions breaking down fatty acids into acetyl-CoA. Among the enzymes involved in this pathway, the trifunctional enzyme exhibits specificity for long-chain fatty acids. Mitochondrial trifunctional enzyme is a heterotetrameric complex composed of two proteins, the trifunctional enzyme subunit alpha/HADHA carries the 2,3-enoyl-CoA hydratase and the 3-hydroxyacyl-CoA dehydrogenase activities, while the trifunctional enzyme subunit beta/HADHB described here bears the 3-ketoacyl-CoA thiolase activity. The protein is Trifunctional enzyme subunit beta, mitochondrial (HADHB) of Pan troglodytes (Chimpanzee).